A 347-amino-acid chain; its full sequence is Heat-inducible transcription repressor HrcA (347 aa).

Belongs to the HrcA family.

Negative regulator of class I heat shock genes (grpE-dnaK-dnaJ and groELS operons). Prevents heat-shock induction of these operons. The protein is Heat-inducible transcription repressor HrcA of Mycoplasmopsis pulmonis (strain UAB CTIP) (Mycoplasma pulmonis).